We begin with the raw amino-acid sequence, 219 residues long: MSKKNSTPLISAVNLTCIREERLLFDELSLQINAGDIVQVEGPNGSGKTSLLRILSGLSQPYDGQILYREQLISHCREEFHQNLLYFGHLSGVKGEMTAEENLDFNLALHGNKTQESLSYLAKVNLSGFEECLASHLSAGQHRRIALARLYQSNVPIWILDEPFTAIDKQGVASLERLFSLHAERGGCVILTTHQDLISIKPEQIKKITLDYSYDSAVD.

The region spanning 10-218 is the ABC transporter domain; sequence ISAVNLTCIR…TLDYSYDSAV (209 aa). Residue 42–49 coordinates ATP; that stretch reads GPNGSGKT.

Belongs to the ABC transporter superfamily. CcmA exporter (TC 3.A.1.107) family. The complex is composed of two ATP-binding proteins (CcmA) and two transmembrane proteins (CcmB).

The protein resides in the cell inner membrane. It catalyses the reaction heme b(in) + ATP + H2O = heme b(out) + ADP + phosphate + H(+). Its function is as follows. Part of the ABC transporter complex CcmAB involved in the biogenesis of c-type cytochromes; once thought to export heme, this seems not to be the case, but its exact role is uncertain. Responsible for energy coupling to the transport system. The polypeptide is Cytochrome c biogenesis ATP-binding export protein CcmA (Colwellia psychrerythraea (strain 34H / ATCC BAA-681) (Vibrio psychroerythus)).